Consider the following 707-residue polypeptide: Integrator complex subunit 13 (707 aa).

A compositionally biased stretch (basic and acidic residues) spans 565–625; it reads PPEEEERKKR…AEAEVIKDSP (61 aa). Positions 565 to 651 are disordered; it reads PPEEEERKKR…TGPAEKSKGP (87 aa). A coiled-coil region spans residues 567 to 622; sequence EEEERKKRGRKREDKEEKAEKPPKENEHEKKWQESERVKSVLDREKEDLAEAEVIK. The Nuclear localization signal (NLS) motif lies at 573–583; it reads KRGRKREDKEE. The tract at residues 650 to 695 is cleavage module binding motif (CMBM); the sequence is GPMSLLSLWSSRINTANSRKHQEFVGRLNSVNNKAELYQHLKEENG.

It belongs to the Integrator subunit 13 family. In terms of assembly, component of the Integrator complex, composed of core subunits INTS1, INTS2, INTS3, INTS4, INTS5, INTS6, INTS7, INTS8, INTS9/RC74, INTS10, INTS11/CPSF3L, INTS12, INTS13, INTS14 and INTS15. The core complex associates with protein phosphatase 2A subunits PPP2CA and PPP2R1A, to form the Integrator-PP2A (INTAC) complex. INTS13 is part of the tail subcomplex, composed of INTS10, INTS13, INTS14 and INTS15.

It is found in the nucleus. Its subcellular location is the cytoplasm. Its function is as follows. Component of the integrator complex, a multiprotein complex that terminates RNA polymerase II (Pol II) transcription in the promoter-proximal region of genes. The integrator complex provides a quality checkpoint during transcription elongation by driving premature transcription termination of transcripts that are unfavorably configured for transcriptional elongation: the complex terminates transcription by (1) catalyzing dephosphorylation of the C-terminal domain (CTD) of Pol II subunit POLR2A/RPB1 and SUPT5H/SPT5, (2) degrading the exiting nascent RNA transcript via endonuclease activity and (3) promoting the release of Pol II from bound DNA. The integrator complex is also involved in terminating the synthesis of non-coding Pol II transcripts, such as enhancer RNAs (eRNAs), small nuclear RNAs (snRNAs), telomerase RNAs and long non-coding RNAs (lncRNAs). Within the integrator complex, INTS13 is part of the integrator tail module and acts as a platform for the recruitment of transcription factors at promoters. In Xenopus tropicalis (Western clawed frog), this protein is Integrator complex subunit 13.